The following is a 376-amino-acid chain: Chaperone protein DnaJ (376 aa).

The J domain maps to 5–70 (DYYEILGVSK…QKRAAYDQYG (66 aa)). The segment at 131-209 (GVTKEIRIPT…CHGHGRVERS (79 aa)) adopts a CR-type zinc-finger fold. 8 residues coordinate Zn(2+): Cys-144, Cys-147, Cys-161, Cys-164, Cys-183, Cys-186, Cys-197, and Cys-200. CXXCXGXG motif repeat units lie at residues 144–151 (CDVCHGSG), 161–168 (CPTCHGSG), 183–190 (CPHCQGRG), and 197–204 (CNKCHGHG).

This sequence belongs to the DnaJ family. In terms of assembly, homodimer. The cofactor is Zn(2+).

It localises to the cytoplasm. Its function is as follows. Participates actively in the response to hyperosmotic and heat shock by preventing the aggregation of stress-denatured proteins and by disaggregating proteins, also in an autonomous, DnaK-independent fashion. Unfolded proteins bind initially to DnaJ; upon interaction with the DnaJ-bound protein, DnaK hydrolyzes its bound ATP, resulting in the formation of a stable complex. GrpE releases ADP from DnaK; ATP binding to DnaK triggers the release of the substrate protein, thus completing the reaction cycle. Several rounds of ATP-dependent interactions between DnaJ, DnaK and GrpE are required for fully efficient folding. Also involved, together with DnaK and GrpE, in the DNA replication of plasmids through activation of initiation proteins. This chain is Chaperone protein DnaJ, found in Shigella flexneri serotype 5b (strain 8401).